We begin with the raw amino-acid sequence, 156 residues long: ATP synthase subunit b (156 aa).

A helical transmembrane segment spans residues 12-32; that stretch reads VAFFIFVLFCMKFVWPPVIAA.

Belongs to the ATPase B chain family. In terms of assembly, F-type ATPases have 2 components, F(1) - the catalytic core - and F(0) - the membrane proton channel. F(1) has five subunits: alpha(3), beta(3), gamma(1), delta(1), epsilon(1). F(0) has three main subunits: a(1), b(2) and c(10-14). The alpha and beta chains form an alternating ring which encloses part of the gamma chain. F(1) is attached to F(0) by a central stalk formed by the gamma and epsilon chains, while a peripheral stalk is formed by the delta and b chains.

The protein resides in the cell inner membrane. F(1)F(0) ATP synthase produces ATP from ADP in the presence of a proton or sodium gradient. F-type ATPases consist of two structural domains, F(1) containing the extramembraneous catalytic core and F(0) containing the membrane proton channel, linked together by a central stalk and a peripheral stalk. During catalysis, ATP synthesis in the catalytic domain of F(1) is coupled via a rotary mechanism of the central stalk subunits to proton translocation. Functionally, component of the F(0) channel, it forms part of the peripheral stalk, linking F(1) to F(0). The sequence is that of ATP synthase subunit b from Pseudomonas paraeruginosa (strain DSM 24068 / PA7) (Pseudomonas aeruginosa (strain PA7)).